The following is a 109-amino-acid chain: U4-lycotoxin-Ls1d (109 aa).

The signal sequence occupies residues 1–22 (MKVLVLFSVLFLTLFSYSSTEA). Positions 23-44 (MDEFDSDAEEDMLSLMANEQVR) are excised as a propeptide. Positions 45–88 (AKACTPRLHDCSHDRHSCCRGELFKDVCYCFYPEGEDKTEVCSC) are knottin domain. Cystine bridges form between Cys48–Cys63, Cys55–Cys72, Cys62–Cys88, and Cys74–Cys86. A linear cationic cytotoxin domain region spans residues 89–108 (QQPKSHKYIEKVVDKARTVV).

Belongs to the neurotoxin 19 (CSTX) family. 05 (U4-Lctx) subfamily. Expressed by the venom gland.

The protein localises to the secreted. Functionally, enhances the high-affinity desensitization of human P2RX3 purinoceptors. This is U4-lycotoxin-Ls1d from Lycosa singoriensis (Wolf spider).